The sequence spans 479 residues: NADH oxidase (479 aa).

FAD is bound by residues 8-12 (GVNHA), aspartate 33, cysteine 43, valine 80, 111-114 (ASGA), lysine 149, and tyrosine 177. The active-site Proton acceptor is histidine 11. Residue cysteine 43 is the Redox-active of the active site. A Cysteine sulfinic acid (-SO2H) modification is found at cysteine 43. Residues 170–185 (VAIV…LAEA), aspartate 197, and glycine 264 contribute to the NAD(+) site. Residues 295 to 305 (LNHENVYVIGG), leucine 322, alanine 323, and threonine 324 each bind FAD. Residue alanine 353 participates in NAD(+) binding. Phenylalanine 450 is a binding site for FAD.

Belongs to the class-III pyridine nucleotide-disulfide oxidoreductase family. It depends on FAD as a cofactor.

The enzyme catalyses 2 NADH + O2 + 2 H(+) = 2 NAD(+) + 2 H2O. Functionally, catalyzes the four-electron reduction of molecular oxygen to water. The protein is NADH oxidase (nox) of Mycoplasma pneumoniae (strain ATCC 29342 / M129 / Subtype 1) (Mycoplasmoides pneumoniae).